The following is a 595-amino-acid chain: MSSSMNVATMQALTFSRRLLPSVASRYLSSSSVTVTGYSGRSSAYAPSFRSIKCVSVSPEASIVSDTKKLADASKSTNLIPIYRCIFSDQLTPVLAYRCLVKEDDREAPSFLFESVEPGSQMSSVGRYSVVGAQPAMEIVAKENKVIVMDHNNETMTEEFVEDPMEIPRKISEKWNPDPQLVQDLPDAFCGGWVGFFSYDTVRYVEKRKLPFSKAPEDDRNLPDMHLGLYDDVVVFDHVEKKAYVIHWIRLDGSLPYEKAYSNGMQHLENLVAKLHDIEPPKLAAGNVNLQTRQFGPSLDNSNVTCEEYKEAVVKAKEHILAGDIFQIVLSQRFERRTFADPFEVYRALRVVNPSPYMGYLQARGCILVASSPEILTKVKQNKIVNRPLAGTSKRGKNEVEDKRLEKELLENEKQCAEHIMLVDLGRNDVGKVTKYGSVKVEKLMNIERYSHVMHISSTVTGELQDGLTCWDVLRAALPVGTVSGAPKVKAMELIDELEPTRRGPYSGGFGGVSFTGDMDIALSLRTIVFPTACQYNTMYSYKDANKRREWVAYLQAGAGVVADSDPQDEHCECQNKAAGLARAIDLAESAFVKK.

A chloroplast-targeting transit peptide spans 1 to 54; that stretch reads MSSSMNVATMQALTFSRRLLPSVASRYLSSSSVTVTGYSGRSSAYAPSFRSIKC. Val55 bears the N-acetylvaline mark. Residues Ser115 and 356 to 358 each bind L-tryptophan; that span reads PYM. 391-392 lines the chorismate pocket; that stretch reads GT. Glu418 serves as a coordination point for Mg(2+). Chorismate contacts are provided by residues Tyr506, Arg526, 558–560, and Gly560; that span reads GAG. Glu573 serves as a coordination point for Mg(2+).

The protein belongs to the anthranilate synthase component I family. In terms of assembly, heterotetramer consisting of two non-identical subunits: a beta subunit and a large alpha subunit. Mg(2+) serves as cofactor. As to expression, expressed in the central cylinder of mature primary root zones, including pericycle and early lateral root primordia, and vasculature of cotyledons.

The protein localises to the plastid. The protein resides in the chloroplast. The catalysed reaction is chorismate + L-glutamine = anthranilate + pyruvate + L-glutamate + H(+). The protein operates within amino-acid biosynthesis; L-tryptophan biosynthesis; L-tryptophan from chorismate: step 1/5. Feedback inhibition by tryptophan. Functionally, part of a heterotetrameric complex that catalyzes the two-step biosynthesis of anthranilate, an intermediate in the biosynthesis of L-tryptophan. In the first step, the glutamine-binding beta subunit of anthranilate synthase (AS) provides the glutamine amidotransferase activity which generates ammonia as a substrate that, along with chorismate, is used in the second step, catalyzed by the large alpha subunit of AS to produce anthranilate. Plays an important regulatory role in auxin production via the tryptophan-dependent biosynthetic pathway. The sequence is that of Anthranilate synthase alpha subunit 1, chloroplastic (ASA1) from Arabidopsis thaliana (Mouse-ear cress).